The following is a 316-amino-acid chain: Ribose-phosphate pyrophosphokinase (316 aa).

ATP is bound by residues 39–41 (DGE) and 98–99 (RQ). H133 and D172 together coordinate Mg(2+). K195 is a catalytic residue. D-ribose 5-phosphate-binding positions include R197, D221, and 225–229 (DTGGT).

The protein belongs to the ribose-phosphate pyrophosphokinase family. Class I subfamily. In terms of assembly, homohexamer. Requires Mg(2+) as cofactor.

It localises to the cytoplasm. The catalysed reaction is D-ribose 5-phosphate + ATP = 5-phospho-alpha-D-ribose 1-diphosphate + AMP + H(+). Its pathway is metabolic intermediate biosynthesis; 5-phospho-alpha-D-ribose 1-diphosphate biosynthesis; 5-phospho-alpha-D-ribose 1-diphosphate from D-ribose 5-phosphate (route I): step 1/1. In terms of biological role, involved in the biosynthesis of the central metabolite phospho-alpha-D-ribosyl-1-pyrophosphate (PRPP) via the transfer of pyrophosphoryl group from ATP to 1-hydroxyl of ribose-5-phosphate (Rib-5-P). The chain is Ribose-phosphate pyrophosphokinase from Ralstonia nicotianae (strain ATCC BAA-1114 / GMI1000) (Ralstonia solanacearum).